Here is an 83-residue protein sequence, read N- to C-terminus: Putative defensin-like protein 110 (83 aa).

Residues methionine 1 to cysteine 24 form the signal peptide. 4 disulfide bridges follow: cysteine 43–cysteine 81, cysteine 49–cysteine 73, cysteine 59–cysteine 79, and cysteine 63–cysteine 80.

It belongs to the DEFL family.

It is found in the secreted. This is Putative defensin-like protein 110 from Arabidopsis thaliana (Mouse-ear cress).